The primary structure comprises 351 residues: DNA polymerase IV (351 aa).

In terms of domain architecture, UmuC spans 4–185; that stretch reads IIHVDMDCFY…LPLGKIPGVG (182 aa). Mg(2+) contacts are provided by D8 and D103. E104 is a catalytic residue.

The protein belongs to the DNA polymerase type-Y family. Monomer. Mg(2+) is required as a cofactor.

Its subcellular location is the cytoplasm. The catalysed reaction is DNA(n) + a 2'-deoxyribonucleoside 5'-triphosphate = DNA(n+1) + diphosphate. Poorly processive, error-prone DNA polymerase involved in untargeted mutagenesis. Copies undamaged DNA at stalled replication forks, which arise in vivo from mismatched or misaligned primer ends. These misaligned primers can be extended by PolIV. Exhibits no 3'-5' exonuclease (proofreading) activity. May be involved in translesional synthesis, in conjunction with the beta clamp from PolIII. The protein is DNA polymerase IV of Citrobacter koseri (strain ATCC BAA-895 / CDC 4225-83 / SGSC4696).